A 310-amino-acid polypeptide reads, in one-letter code: Protoheme IX farnesyltransferase (310 aa).

Helical transmembrane passes span 31–51, 53–73, 102–122, 124–144, 149–169, 170–190, 242–262, and 289–309; these read VIEL…RGSV, PLLI…ANTL, NALI…WGTS, LLSG…YTLL, TSQN…IGWS, AVTG…FFWT, LATG…FLVM, and LAVV…TLLG.

It belongs to the UbiA prenyltransferase family. Protoheme IX farnesyltransferase subfamily.

The protein resides in the cell membrane. The catalysed reaction is heme b + (2E,6E)-farnesyl diphosphate + H2O = Fe(II)-heme o + diphosphate. It functions in the pathway porphyrin-containing compound metabolism; heme O biosynthesis; heme O from protoheme: step 1/1. Its function is as follows. Converts heme B (protoheme IX) to heme O by substitution of the vinyl group on carbon 2 of heme B porphyrin ring with a hydroxyethyl farnesyl side group. The chain is Protoheme IX farnesyltransferase from Mycobacterium sp. (strain JLS).